The following is a 782-amino-acid chain: DnaJ homolog subfamily C member 16 (782 aa).

The N-terminal stretch at 1–25 (MEVRKLSISWQFLIVLVLILQILSA) is a signal peptide. The Cytoplasmic portion of the chain corresponds to 26-535 (LDFDPYKVLG…DSIFHNNWRE (510 aa)). Residues 29-93 (DPYKVLGVSR…EKRSNYDQYG (65 aa)) form the J domain. The region spanning 119 to 247 (FYFDESFFHF…LRQFVESLLP (129 aa)) is the Thioredoxin domain. A helical; Anchor for type IV membrane protein transmembrane segment spans residues 536–556 (MMPLLSLIFSALFILFGTVIV). The Extracellular portion of the chain corresponds to 557-782 (QAFSDSSDER…FYIPSWPELD (226 aa)). The segment at 562-593 (SSDERESSPPDKEEAQEKTGKTEPSFTKENSS) is disordered. Over residues 563–582 (SDERESSPPDKEEAQEKTGK) the composition is skewed to basic and acidic residues. Polar residues predominate over residues 583 to 593 (TEPSFTKENSS). Asn-631 carries an N-linked (GlcNAc...) asparagine glycan.

The protein resides in the endoplasmic reticulum membrane. Its function is as follows. Plays an important role in regulating the size of autophagosomes during the formation process. This chain is DnaJ homolog subfamily C member 16 (DNAJC16), found in Pongo abelii (Sumatran orangutan).